The chain runs to 325 residues: Tetraacyldisaccharide 4'-kinase (325 aa).

Position 55–62 (55–62) interacts with ATP; the sequence is TAGGNGKT.

It belongs to the LpxK family.

The catalysed reaction is a lipid A disaccharide + ATP = a lipid IVA + ADP + H(+). It participates in glycolipid biosynthesis; lipid IV(A) biosynthesis; lipid IV(A) from (3R)-3-hydroxytetradecanoyl-[acyl-carrier-protein] and UDP-N-acetyl-alpha-D-glucosamine: step 6/6. In terms of biological role, transfers the gamma-phosphate of ATP to the 4'-position of a tetraacyldisaccharide 1-phosphate intermediate (termed DS-1-P) to form tetraacyldisaccharide 1,4'-bis-phosphate (lipid IVA). The protein is Tetraacyldisaccharide 4'-kinase of Citrobacter koseri (strain ATCC BAA-895 / CDC 4225-83 / SGSC4696).